Reading from the N-terminus, the 106-residue chain is UPF0060 membrane protein RL1530 (106 aa).

4 consecutive transmembrane segments (helical) span residues 4–24, 30–50, 58–78, and 86–106; these read IIFAFAALFEIAGCFAFWAWL, VWWLAPGMVSLALFAWILTLV, TFAAYGGIYILASLLWLWLVE, and DIGGALICLAGASLILFAPRG.

Belongs to the UPF0060 family.

The protein resides in the cell inner membrane. The protein is UPF0060 membrane protein RL1530 of Rhizobium johnstonii (strain DSM 114642 / LMG 32736 / 3841) (Rhizobium leguminosarum bv. viciae).